The primary structure comprises 157 residues: MPRRREVPKREILPDPKFGNVELSKFMNVIMEGGKKAVAERIIYGALELIQKKHPDKDPLEAFTVAINNVKPMVEVKSRRVGGANYQVPVEVRPVRRLALSMRWLKEAARKRGEKSMAQRLANELLEATEGRGGAMKRRDEVHRMAEANKAFSHFRF.

This sequence belongs to the universal ribosomal protein uS7 family. As to quaternary structure, part of the 30S ribosomal subunit. Contacts proteins S9 and S11.

Its function is as follows. One of the primary rRNA binding proteins, it binds directly to 16S rRNA where it nucleates assembly of the head domain of the 30S subunit. Is located at the subunit interface close to the decoding center, probably blocks exit of the E-site tRNA. The protein is Small ribosomal subunit protein uS7 of Paracidovorax citrulli (strain AAC00-1) (Acidovorax citrulli).